Consider the following 492-residue polypeptide: G2/mitotic-specific cyclin CYB1 (492 aa).

Residues 1–176 form a disordered region; that stretch reads MPQVTKTNNE…QPEVGERSQS (176 aa). Polar residues predominate over residues 23–33; sequence QESISTIKNTT. The segment covering 34–58 has biased composition (low complexity); the sequence is ISNSQHKQQTQQQISSPPQVSVTSS. The segment covering 59 to 83 has biased composition (polar residues); that stretch reads EGVSHVNTRQYLGDVSNQYITNAKP. Over residues 111-135 the composition is skewed to low complexity; that stretch reads ASDNNNNGSTSSSSNSSNNNNNDAN.

This sequence belongs to the cyclin family. Cyclin AB subfamily.

Functionally, essential for the control of the cell cycle at the G2/M (mitosis) transition. Interacts with the CDC2 protein kinase to form MPF. G2/M cyclins accumulate steadily during G2 and are abruptly destroyed at mitosis. The sequence is that of G2/mitotic-specific cyclin CYB1 (CYB1) from Candida albicans (Yeast).